Consider the following 189-residue polypeptide: MAQEKRGSRDDRQNREERDSEFVDKLVAINRVAKVVKGGRRFGFAALVVVGDQKGRVGFGHGKAREVPEAIRKATESAKRDLIFVPLRDGRTLHHDVNGRHGAGKVLLRSAKAGTGIIAGGPMRAVFETLGVHDVVAKSTGSSNPYNMVRATFDALKHQVHPKDIAAQRGLKYATLQARRAASGNASEE.

Residues 22–85 form the S5 DRBM domain; it reads FVDKLVAINR…ESAKRDLIFV (64 aa).

This sequence belongs to the universal ribosomal protein uS5 family. Part of the 30S ribosomal subunit. Contacts proteins S4 and S8.

Its function is as follows. With S4 and S12 plays an important role in translational accuracy. Functionally, located at the back of the 30S subunit body where it stabilizes the conformation of the head with respect to the body. This is Small ribosomal subunit protein uS5 from Agrobacterium fabrum (strain C58 / ATCC 33970) (Agrobacterium tumefaciens (strain C58)).